The sequence spans 288 residues: Cyclin-dependent kinase 2 homolog (288 aa).

Residues 4–284 (YHGLEKIGEG…AKQAIEHPYF (281 aa)) form the Protein kinase domain. ATP is bound by residues 10–18 (IGEGTYGVV) and lysine 32. Phosphothreonine is present on threonine 14. Tyrosine 15 bears the Phosphotyrosine mark. Aspartate 125 acts as the Proton acceptor in catalysis. Threonine 158 carries the post-translational modification Phosphothreonine.

Belongs to the protein kinase superfamily. CMGC Ser/Thr protein kinase family. CDC2/CDKX subfamily. In terms of assembly, may form a complex composed of at least the catalytic subunit CRK2 and a cyclin. The cofactor is Mg(2+).

The protein resides in the cytoplasm. The enzyme catalyses L-seryl-[protein] + ATP = O-phospho-L-seryl-[protein] + ADP + H(+). It catalyses the reaction L-threonyl-[protein] + ATP = O-phospho-L-threonyl-[protein] + ADP + H(+). It carries out the reaction [DNA-directed RNA polymerase] + ATP = phospho-[DNA-directed RNA polymerase] + ADP + H(+). Its activity is regulated as follows. Phosphorylation at Thr-14 or Tyr-15 inactivates the enzyme, while phosphorylation at Thr-158 activates it. Its function is as follows. Serine/threonine-protein kinase. Involved in the control of the cell cycle. Required for entry into S-phase and mitosis. Probable component of the kinase complex that phosphorylates the repetitive C-terminus of RNA polymerase II. This chain is Cyclin-dependent kinase 2 homolog, found in Plasmodium berghei (strain Anka).